Reading from the N-terminus, the 351-residue chain is Holliday junction branch migration complex subunit RuvB (351 aa).

A large ATPase domain (RuvB-L) region spans residues 1–189 (MTAHDADWSD…FGFTAHMDFY (189 aa)). Residues L28, R29, G70, K73, T74, S75, 136–138 (EDF), R179, Y189, and R226 each bind ATP. T74 serves as a coordination point for Mg(2+). The tract at residues 190 to 260 (EPAELQQVLA…VAKAALAVYD (71 aa)) is small ATPAse domain (RuvB-S). A head domain (RuvB-H) region spans residues 263 to 351 (ELGLDRLDRA…AGLGQPGLFD (89 aa)). Residues R318 and R323 each coordinate DNA.

The protein belongs to the RuvB family. In terms of assembly, homohexamer. Forms an RuvA(8)-RuvB(12)-Holliday junction (HJ) complex. HJ DNA is sandwiched between 2 RuvA tetramers; dsDNA enters through RuvA and exits via RuvB. An RuvB hexamer assembles on each DNA strand where it exits the tetramer. Each RuvB hexamer is contacted by two RuvA subunits (via domain III) on 2 adjacent RuvB subunits; this complex drives branch migration. In the full resolvosome a probable DNA-RuvA(4)-RuvB(12)-RuvC(2) complex forms which resolves the HJ.

Its subcellular location is the cytoplasm. The enzyme catalyses ATP + H2O = ADP + phosphate + H(+). Functionally, the RuvA-RuvB-RuvC complex processes Holliday junction (HJ) DNA during genetic recombination and DNA repair, while the RuvA-RuvB complex plays an important role in the rescue of blocked DNA replication forks via replication fork reversal (RFR). RuvA specifically binds to HJ cruciform DNA, conferring on it an open structure. The RuvB hexamer acts as an ATP-dependent pump, pulling dsDNA into and through the RuvAB complex. RuvB forms 2 homohexamers on either side of HJ DNA bound by 1 or 2 RuvA tetramers; 4 subunits per hexamer contact DNA at a time. Coordinated motions by a converter formed by DNA-disengaged RuvB subunits stimulates ATP hydrolysis and nucleotide exchange. Immobilization of the converter enables RuvB to convert the ATP-contained energy into a lever motion, pulling 2 nucleotides of DNA out of the RuvA tetramer per ATP hydrolyzed, thus driving DNA branch migration. The RuvB motors rotate together with the DNA substrate, which together with the progressing nucleotide cycle form the mechanistic basis for DNA recombination by continuous HJ branch migration. Branch migration allows RuvC to scan DNA until it finds its consensus sequence, where it cleaves and resolves cruciform DNA. This Mycobacterium avium (strain 104) protein is Holliday junction branch migration complex subunit RuvB.